Consider the following 313-residue polypeptide: Recombination-promoting nuclease pSLT051 (313 aa).

Belongs to the Rpn/YhgA-like nuclease family.

In terms of biological role, a low activity DNA endonuclease probably yielding 3'-hydroxyl ends. Involved in RecA-independent recombination and horizontal gene transfer. This Salmonella typhimurium (strain LT2 / SGSC1412 / ATCC 700720) protein is Recombination-promoting nuclease pSLT051.